We begin with the raw amino-acid sequence, 354 residues long: Selection and upkeep of intraepithelial T-cells protein 10 (354 aa).

Residues 1-52 form the signal peptide; sequence MFLRTQMEQSQADIFALIKPHFGVMESSASYLPGFFMTFLLLQTTVLTQAMS. The Ig-like V-type domain occupies 53–141; sequence LDIQINIQVP…TNREKKRSVV (89 aa). The Extracellular segment spans residues 53–158; it reads LDIQINIQVP…SEYMSLMSNK (106 aa). A disulfide bond links C71 and C125. An N-linked (GlcNAc...) asparagine glycan is attached at N129. The chain crosses the membrane as a helical span at residues 159–179; it reads FSCPLTYLFIIIFLNCLKGML. Topologically, residues 180–209 are cytoplasmic; the sequence is DFCCLKGKPVYFRELINKIKEVLNIKMRAC. A helical transmembrane segment spans residues 210-230; sequence CTLIWEFLLIVLYIAFLPFYL. At 231–252 the chain is on the extracellular side; that stretch reads KFRSRASILDDAYPLHSNWLWD. Residues 253-273 traverse the membrane as a helical segment; sequence ICIVLSVLMIFFTGLSLFLLW. Over 274–354 the chain is Cytoplasmic; the sequence is TLNCYGQMSY…RLDCSLNWKT (81 aa).

The protein belongs to the SKINT family. In terms of tissue distribution, expressed in skin and thymus.

Its subcellular location is the membrane. Its function is as follows. May act by engaging a cell surface molecule on immature T-cells in the embryonic thymus. This chain is Selection and upkeep of intraepithelial T-cells protein 10 (Skint10), found in Mus musculus (Mouse).